We begin with the raw amino-acid sequence, 586 residues long: Pectinesterase 1 (586 aa).

The first 49 residues, 1–49 (MDSVNSFKGYGKVDEAQDLALKKKTRKRLLLLSISVVVLIAVIIAAVVA), serve as a signal peptide directing secretion. N-linked (GlcNAc...) asparagine glycosylation is found at asparagine 57, asparagine 97, asparagine 154, asparagine 201, and asparagine 207. Residues 250 to 253 (RRLM) carry the RRLM cleavage motif motif. The RRLL cleavage motif motif lies at 269 to 272 (RRLL). Residues threonine 355 and glutamine 385 each contribute to the substrate site. Aspartate 408 (proton donor) is an active-site residue. Cysteine 422 and cysteine 442 are disulfide-bonded. Aspartate 429 (nucleophile) is an active-site residue. A glycan (N-linked (GlcNAc...) asparagine) is linked at asparagine 466. Substrate is bound by residues arginine 492 and tryptophan 494.

It in the N-terminal section; belongs to the PMEI family. In the C-terminal section; belongs to the pectinesterase family. In terms of assembly, interacts with SBT6.1. In terms of tissue distribution, expressed in siliques.

The protein localises to the secreted. It is found in the cell wall. The protein resides in the golgi apparatus membrane. It catalyses the reaction [(1-&gt;4)-alpha-D-galacturonosyl methyl ester](n) + n H2O = [(1-&gt;4)-alpha-D-galacturonosyl](n) + n methanol + n H(+). Its pathway is glycan metabolism; pectin degradation; 2-dehydro-3-deoxy-D-gluconate from pectin: step 1/5. Acts in the modification of cell walls via demethylesterification of cell wall pectin. Demethylates protein phosphatase 2A (PP2A) that have been reversibly carboxymethylated by LCMT1. Acts as a negative regulators of genes involved in salt stress response. This is Pectinesterase 1 (PME1) from Arabidopsis thaliana (Mouse-ear cress).